The following is an 879-amino-acid chain: Alanine--tRNA ligase (879 aa).

Zn(2+)-binding residues include His566, His570, Cys668, and His672.

It belongs to the class-II aminoacyl-tRNA synthetase family. It depends on Zn(2+) as a cofactor.

Its subcellular location is the cytoplasm. The enzyme catalyses tRNA(Ala) + L-alanine + ATP = L-alanyl-tRNA(Ala) + AMP + diphosphate. Functionally, catalyzes the attachment of alanine to tRNA(Ala) in a two-step reaction: alanine is first activated by ATP to form Ala-AMP and then transferred to the acceptor end of tRNA(Ala). Also edits incorrectly charged Ser-tRNA(Ala) and Gly-tRNA(Ala) via its editing domain. The chain is Alanine--tRNA ligase from Listeria welshimeri serovar 6b (strain ATCC 35897 / DSM 20650 / CCUG 15529 / CIP 8149 / NCTC 11857 / SLCC 5334 / V8).